The chain runs to 432 residues: Glutamate-1-semialdehyde 2,1-aminomutase (432 aa).

Residue K272 is modified to N6-(pyridoxal phosphate)lysine.

This sequence belongs to the class-III pyridoxal-phosphate-dependent aminotransferase family. HemL subfamily. In terms of assembly, homodimer. Pyridoxal 5'-phosphate serves as cofactor.

The protein localises to the cytoplasm. The catalysed reaction is (S)-4-amino-5-oxopentanoate = 5-aminolevulinate. Its pathway is porphyrin-containing compound metabolism; protoporphyrin-IX biosynthesis; 5-aminolevulinate from L-glutamyl-tRNA(Glu): step 2/2. The protein operates within porphyrin-containing compound metabolism; chlorophyll biosynthesis. The protein is Glutamate-1-semialdehyde 2,1-aminomutase of Nostoc punctiforme (strain ATCC 29133 / PCC 73102).